The primary structure comprises 332 residues: Glycerol-3-phosphate dehydrogenase [NAD(P)+] (332 aa).

NADPH is bound by residues serine 11, tryptophan 12, lysine 32, and lysine 106. Residues lysine 106, glycine 137, and serine 139 each contribute to the sn-glycerol 3-phosphate site. Alanine 141 contributes to the NADPH binding site. Sn-glycerol 3-phosphate contacts are provided by lysine 192, aspartate 245, serine 255, arginine 256, and asparagine 257. Lysine 192 functions as the Proton acceptor in the catalytic mechanism. Arginine 256 provides a ligand contact to NADPH. The NADPH site is built by valine 280 and glutamate 282.

Belongs to the NAD-dependent glycerol-3-phosphate dehydrogenase family.

It is found in the cytoplasm. The catalysed reaction is sn-glycerol 3-phosphate + NAD(+) = dihydroxyacetone phosphate + NADH + H(+). The enzyme catalyses sn-glycerol 3-phosphate + NADP(+) = dihydroxyacetone phosphate + NADPH + H(+). The protein operates within membrane lipid metabolism; glycerophospholipid metabolism. Functionally, catalyzes the reduction of the glycolytic intermediate dihydroxyacetone phosphate (DHAP) to sn-glycerol 3-phosphate (G3P), the key precursor for phospholipid synthesis. The polypeptide is Glycerol-3-phosphate dehydrogenase [NAD(P)+] (Macrococcus caseolyticus (strain JCSC5402) (Macrococcoides caseolyticum)).